The chain runs to 794 residues: Phenylalanine--tRNA ligase beta subunit (794 aa).

Residues 39–154 (SSSFSSIITA…ANTPLGESAC (116 aa)) form the tRNA-binding domain. Residues 403 to 481 (PPSPTLTLRT…QPWKIEKKKA (79 aa)) form the B5 domain. Residues Asp-457, Asp-463, Glu-466, and Glu-467 each contribute to the Mg(2+) site. Positions 697 to 793 (PIYPSSFRDI…QLDDTKGTID (97 aa)) constitute an FDX-ACB domain.

This sequence belongs to the phenylalanyl-tRNA synthetase beta subunit family. Type 1 subfamily. As to quaternary structure, tetramer of two alpha and two beta subunits. Mg(2+) is required as a cofactor.

It localises to the cytoplasm. It catalyses the reaction tRNA(Phe) + L-phenylalanine + ATP = L-phenylalanyl-tRNA(Phe) + AMP + diphosphate + H(+). In Chlamydia abortus (strain DSM 27085 / S26/3) (Chlamydophila abortus), this protein is Phenylalanine--tRNA ligase beta subunit.